Here is a 425-residue protein sequence, read N- to C-terminus: MNSITLGPLSKANGEIQIPGSKSLSNRILLLATLAKGTTKITNLLDSDDIRRMLESLTKLGVSYSLEDNGTTCVLEGLGGPIQADFGDLFLGNAGTAMRPLTAALCLGKGEFLLHGEPRMHERPIGDLVDALQALGVDITYEGEKNYPPLRIKANGLSGGEVSIKGNISSQFLTAILMSAPLAKSDLTIKVDGELVSKPYIDITLHAMKQFGVEVENQNYQAFVVKGQQTYQSPGEIMVEGDASSASYFLAAAAIAGGKIKVHGVGTDSVQGDVKFADVLAQMGAKITYGPSWIEAERNELNGIDMDMNHIPDAAMTIATTALFAKGPTTIRNIYNWRVKETDRLYAMATELKKLGADVIEGKDFITVTPVANLKHAAIDTYNDHRIAMCFSLVAFSDTPVTINDPGCTSKTFPTYFELFNTIAN.

The 3-phosphoshikimate site is built by Lys-22, Ser-23, and Arg-27. Residue Lys-22 participates in phosphoenolpyruvate binding. The phosphoenolpyruvate site is built by Gly-95 and Arg-123. 3-phosphoshikimate is bound by residues Ser-169, Ser-170, Gln-171, Ser-197, Asp-313, Asn-336, and Lys-340. Gln-171 is a phosphoenolpyruvate binding site. The Proton acceptor role is filled by Asp-313. The phosphoenolpyruvate site is built by Arg-344, Arg-386, and Lys-411.

Belongs to the EPSP synthase family. In terms of assembly, monomer.

It localises to the cytoplasm. It catalyses the reaction 3-phosphoshikimate + phosphoenolpyruvate = 5-O-(1-carboxyvinyl)-3-phosphoshikimate + phosphate. Its pathway is metabolic intermediate biosynthesis; chorismate biosynthesis; chorismate from D-erythrose 4-phosphate and phosphoenolpyruvate: step 6/7. Its function is as follows. Catalyzes the transfer of the enolpyruvyl moiety of phosphoenolpyruvate (PEP) to the 5-hydroxyl of shikimate-3-phosphate (S3P) to produce enolpyruvyl shikimate-3-phosphate and inorganic phosphate. In Marinomonas sp. (strain MWYL1), this protein is 3-phosphoshikimate 1-carboxyvinyltransferase.